The primary structure comprises 339 residues: Heat-inducible transcription repressor HrcA (339 aa).

The protein belongs to the HrcA family.

Negative regulator of class I heat shock genes (grpE-dnaK-dnaJ and groELS operons). Prevents heat-shock induction of these operons. This Methylobacillus flagellatus (strain ATCC 51484 / DSM 6875 / VKM B-1610 / KT) protein is Heat-inducible transcription repressor HrcA.